Here is a 254-residue protein sequence, read N- to C-terminus: 3-deoxy-manno-octulosonate cytidylyltransferase (254 aa).

It belongs to the KdsB family.

It is found in the cytoplasm. The catalysed reaction is 3-deoxy-alpha-D-manno-oct-2-ulosonate + CTP = CMP-3-deoxy-beta-D-manno-octulosonate + diphosphate. It participates in nucleotide-sugar biosynthesis; CMP-3-deoxy-D-manno-octulosonate biosynthesis; CMP-3-deoxy-D-manno-octulosonate from 3-deoxy-D-manno-octulosonate and CTP: step 1/1. Its pathway is bacterial outer membrane biogenesis; lipopolysaccharide biosynthesis. In terms of biological role, activates KDO (a required 8-carbon sugar) for incorporation into bacterial lipopolysaccharide in Gram-negative bacteria. This is 3-deoxy-manno-octulosonate cytidylyltransferase from Bordetella pertussis (strain Tohama I / ATCC BAA-589 / NCTC 13251).